The following is a 468-amino-acid chain: Sorting and assembly machinery component 50 homolog B (468 aa).

Residues 1–25 (MGTVHARSLDPLPMNGPDFGSPDDA) form a disordered region. The POTRA domain occupies 44-124 (VVVQRVHFEG…LDVTFEVTEL (81 aa)).

This sequence belongs to the SAM50/omp85 family. As to quaternary structure, associates with the mitochondrial contact site and cristae organizing system (MICOS) complex (also known as MINOS or MitOS complex).

It localises to the mitochondrion outer membrane. Its function is as follows. May play a role in the maintenance of the structure of mitochondrial cristae. In Xenopus laevis (African clawed frog), this protein is Sorting and assembly machinery component 50 homolog B (samm50-b).